The chain runs to 147 residues: Large ribosomal subunit protein uL13 (147 aa).

Belongs to the universal ribosomal protein uL13 family. As to quaternary structure, part of the 50S ribosomal subunit.

This protein is one of the early assembly proteins of the 50S ribosomal subunit, although it is not seen to bind rRNA by itself. It is important during the early stages of 50S assembly. This Leuconostoc mesenteroides subsp. mesenteroides (strain ATCC 8293 / DSM 20343 / BCRC 11652 / CCM 1803 / JCM 6124 / NCDO 523 / NBRC 100496 / NCIMB 8023 / NCTC 12954 / NRRL B-1118 / 37Y) protein is Large ribosomal subunit protein uL13.